The primary structure comprises 385 residues: Sulfoquinovose monooxygenase (385 aa).

A disordered region spans residues 366 to 385 (AYGRVPSETPATPLGNGERH).

This sequence belongs to the SsuD family. Homodimer.

The catalysed reaction is 6-sulfo-D-quinovose + FMNH2 + O2 = 6-dehydro-D-glucose + FMN + sulfite + H2O + 2 H(+). Part of the sulfoquinovose monooxygenase (sulfo-SMO) pathway, a D-sulfoquinovose degradation pathway that enables the complete utilization of all carbons within sulfoquinovose (SQ) with concomitant production of inorganic sulfite. Catalyzes the oxidative desulfurization of sulfoquinovose to sulfite and 6-dehydro-D-glucose. Is highly specific for sulfoquinovose and cannot use sulfoquinovosyl glycerol. FMNH(2) is provided by the FMN reductase SmoA. In Agrobacterium fabrum (strain C58 / ATCC 33970) (Agrobacterium tumefaciens (strain C58)), this protein is Sulfoquinovose monooxygenase.